Here is a 257-residue protein sequence, read N- to C-terminus: Meiotically up-regulated gene 14 protein (257 aa).

The protein resides in the cytoplasm. It localises to the nucleus. In terms of biological role, has a role in meiosis. The sequence is that of Meiotically up-regulated gene 14 protein (mug14) from Schizosaccharomyces pombe (strain 972 / ATCC 24843) (Fission yeast).